We begin with the raw amino-acid sequence, 214 residues long: Adenylate kinase (214 aa).

10–15 (GAGKGT) contributes to the ATP binding site. The NMP stretch occupies residues 30 to 59 (STGDMLRAAIKAGSELGNKAKAVMDAGQLV). AMP is bound by residues Thr31, Arg36, 57–59 (QLV), 85–88 (GFPR), and Gln92. The tract at residues 122-159 (GRRVHSGSGRVYHLVYNPPKVEGKDDVSGDDLSIRPDD) is LID. ATP contacts are provided by residues Arg123 and 132–133 (VY). 2 residues coordinate AMP: Arg156 and Arg167. Gln200 lines the ATP pocket.

The protein belongs to the adenylate kinase family. Monomer.

It localises to the cytoplasm. It catalyses the reaction AMP + ATP = 2 ADP. It participates in purine metabolism; AMP biosynthesis via salvage pathway; AMP from ADP: step 1/1. Functionally, catalyzes the reversible transfer of the terminal phosphate group between ATP and AMP. Plays an important role in cellular energy homeostasis and in adenine nucleotide metabolism. This chain is Adenylate kinase, found in Colwellia psychrerythraea (strain 34H / ATCC BAA-681) (Vibrio psychroerythus).